We begin with the raw amino-acid sequence, 286 residues long: Bifunctional protein FolD (286 aa).

NADP(+) contacts are provided by residues 165–167 (GRS), Ser190, and Val231.

This sequence belongs to the tetrahydrofolate dehydrogenase/cyclohydrolase family. In terms of assembly, homodimer.

The catalysed reaction is (6R)-5,10-methylene-5,6,7,8-tetrahydrofolate + NADP(+) = (6R)-5,10-methenyltetrahydrofolate + NADPH. It carries out the reaction (6R)-5,10-methenyltetrahydrofolate + H2O = (6R)-10-formyltetrahydrofolate + H(+). The protein operates within one-carbon metabolism; tetrahydrofolate interconversion. Its function is as follows. Catalyzes the oxidation of 5,10-methylenetetrahydrofolate to 5,10-methenyltetrahydrofolate and then the hydrolysis of 5,10-methenyltetrahydrofolate to 10-formyltetrahydrofolate. The polypeptide is Bifunctional protein FolD (Bacillus anthracis (strain A0248)).